Here is a 198-residue protein sequence, read N- to C-terminus: Na(+)-translocating NADH-quinone reductase subunit E (198 aa).

Transmembrane regions (helical) follow at residues 11–31, 35–55, 77–97, 110–130, 140–160, and 176–196; these read AVFI…FLAV, VSPA…AVPV, FLNF…LEMV, GIFL…SFMV, IVYG…LAGL, and LGIT…FSGI.

Belongs to the NqrDE/RnfAE family. As to quaternary structure, composed of six subunits; NqrA, NqrB, NqrC, NqrD, NqrE and NqrF.

It is found in the cell inner membrane. It carries out the reaction a ubiquinone + n Na(+)(in) + NADH + H(+) = a ubiquinol + n Na(+)(out) + NAD(+). NQR complex catalyzes the reduction of ubiquinone-1 to ubiquinol by two successive reactions, coupled with the transport of Na(+) ions from the cytoplasm to the periplasm. NqrA to NqrE are probably involved in the second step, the conversion of ubisemiquinone to ubiquinol. The polypeptide is Na(+)-translocating NADH-quinone reductase subunit E (Haemophilus influenzae (strain ATCC 51907 / DSM 11121 / KW20 / Rd)).